A 521-amino-acid chain; its full sequence is Chromaffin granule amine transporter (521 aa).

The Cytoplasmic portion of the chain corresponds to 1 to 21; the sequence is MLQVVLGAPQRLLKEGRQSRK. A helical membrane pass occupies residues 22–42; it reads LVLVVVFVALLLDNMLLTVVV. Over 43–135 the chain is Lumenal, vesicle; the sequence is PIVPTFLYAT…IEFLEEENVR (93 aa). 3 N-linked (GlcNAc...) asparagine glycosylation sites follow: Asn58, Asn87, and Asn104. A helical transmembrane segment spans residues 136-155; the sequence is IGILFASKALMQLLVNPFVG. Over 156-164 the chain is Cytoplasmic; sequence PLTNRIGYH. The helical transmembrane segment at 165–185 threads the bilayer; sequence IPMFVGFMIMFLSTLMFAFSG. Topologically, residues 186–194 are lumenal, vesicle; the sequence is TYALLFVAR. A helical transmembrane segment spans residues 195 to 215; it reads TLQGIGSSFSSVAGLGMLASV. Residues 216–224 lie on the Cytoplasmic side of the membrane; sequence YTDNYERGR. A helical transmembrane segment spans residues 225–247; the sequence is AMGIALGGLALGLLVGAPFGSVM. At 248–253 the chain is on the lumenal, vesicle side; it reads YEFVGK. A helical membrane pass occupies residues 254-276; the sequence is SSPFLILAFLALLDGALQLCILW. Residues 277–296 lie on the Cytoplasmic side of the membrane; that stretch reads PSKVSPESAMGTSLLTLLKD. A helical transmembrane segment spans residues 297-316; it reads PYILVAAGSICLANMGVAIL. At 317-332 the chain is on the lumenal, vesicle side; it reads EPTLPIWMMQTMCSPE. Residues 333–357 traverse the membrane as a helical segment; sequence WQLGLAFLPASVAYLIGTNLFGVLA. Residues 358 to 362 are Cytoplasmic-facing; the sequence is NKMGR. Residues 363-383 form a helical membrane-spanning segment; that stretch reads WLCSLVGMVAVGISLLCVPLA. Residues 384-394 lie on the Lumenal, vesicle side of the membrane; that stretch reads HNIFGLIGPNA. A helical membrane pass occupies residues 395–415; that stretch reads GLGFAIGMVDSSLMPIMGYLV. Residues 416–419 are Cytoplasmic-facing; that stretch reads DLRH. Residues 420–440 form a helical membrane-spanning segment; sequence TSVYGSVYAIADVAFCVGFAI. The Lumenal, vesicle portion of the chain corresponds to 441–445; it reads GPSTG. A helical membrane pass occupies residues 446-467; sequence GVIVQVIGFPWLMVIIGTINII. The Cytoplasmic portion of the chain corresponds to 468–521; the sequence is YAPLCCFLQNPPAKEEKRAILSQECPTETQMYTFQKPTKAFPLGENSDDPSSGE.

It belongs to the major facilitator superfamily. Vesicular transporter family. As to expression, adrenal gland.

It is found in the cytoplasmic vesicle. The protein localises to the secretory vesicle membrane. Its subcellular location is the secretory vesicle. It localises to the synaptic vesicle membrane. It catalyses the reaction serotonin(in) + 2 H(+)(out) = serotonin(out) + 2 H(+)(in). The enzyme catalyses (R)-noradrenaline(in) + 2 H(+)(out) = (R)-noradrenaline(out) + 2 H(+)(in). It carries out the reaction dopamine(in) + 2 H(+)(out) = dopamine(out) + 2 H(+)(in). With respect to regulation, strongly inhibited by reserpine, ketanserin and methamphetamine. Also inhibited weakly by tetrabenazine. Its function is as follows. Electrogenic antiporter that exchanges one cationic monoamine with two intravesicular protons across the membrane of secretory and synaptic vesicles. Uses the electrochemical proton gradient established by the V-type proton-pump ATPase to accumulate high concentrations of monoamines inside the vesicles prior to their release via exocytosis. Transports catecholamines and indolamines with higher affinity for serotonin. Regulates the transvesicular monoaminergic gradient that determines the quantal size. Mediates presynaptic monoaminergic vesicle transport in the amygdala and prefrontal brain regions related with emotion processing in response to environmental stimuli. The polypeptide is Chromaffin granule amine transporter (Slc18a1) (Rattus norvegicus (Rat)).